We begin with the raw amino-acid sequence, 83 residues long: Acyl carrier protein (83 aa).

The 76-residue stretch at 2–77 (STIEEKVKTI…AAIDFISNSH (76 aa)) folds into the Carrier domain. At S37 the chain carries O-(pantetheine 4'-phosphoryl)serine.

Belongs to the acyl carrier protein (ACP) family. 4'-phosphopantetheine is transferred from CoA to a specific serine of apo-ACP by AcpS. This modification is essential for activity because fatty acids are bound in thioester linkage to the sulfhydryl of the prosthetic group.

The protein resides in the cytoplasm. Its pathway is lipid metabolism; fatty acid biosynthesis. In terms of biological role, carrier of the growing fatty acid chain in fatty acid biosynthesis. The chain is Acyl carrier protein from Blochmanniella pennsylvanica (strain BPEN).